Here is a 171-residue protein sequence, read N- to C-terminus: MDKAGKSAALENLKGVFEGAGVVVVTHYAGLTVAEMTKLRGLLRKDGAHFKVVKNRLAKIALGGVGGDKAQDLFQGPVAIAYSPDPVAAAKAADEFSRENSKLVIIGAVMGEQVLDAKGVEALAKLPSLDQLRGKIIGVIQAPATKVAGVIQAPASQLARVVSAYASKDAA.

Belongs to the universal ribosomal protein uL10 family. In terms of assembly, part of the ribosomal stalk of the 50S ribosomal subunit. The N-terminus interacts with L11 and the large rRNA to form the base of the stalk. The C-terminus forms an elongated spine to which L12 dimers bind in a sequential fashion forming a multimeric L10(L12)X complex.

Forms part of the ribosomal stalk, playing a central role in the interaction of the ribosome with GTP-bound translation factors. The polypeptide is Large ribosomal subunit protein uL10 (Hyphomonas neptunium (strain ATCC 15444)).